The chain runs to 74 residues: U3-agatoxin-Ao1f (74 aa).

The N-terminal stretch at 1-20 is a signal peptide; that stretch reads MRAIISLLLISTMVFGVIEA. The propeptide occupies 21–34; it reads VSLEEGLKIFEGER. Intrachain disulfides connect Cys37/Cys53, Cys44/Cys58, Cys52/Cys68, and Cys60/Cys66. Asn72 bears the Asparagine amide mark.

The protein belongs to the neurotoxin 07 (Beta/delta-agtx) family. 03 (aga-4) subfamily. Aga sub-subfamily. As to expression, expressed by the venom gland.

It is found in the secreted. Functionally, insecticidal neurotoxin that modulates the insect Nav channel (DmNaV1/tipE (para/tipE)) in a unique manner, with both the activation and inactivation processes being affected. The voltage dependence of activation is shifted toward more hyperpolarized potentials (analogous to site 4 toxins) and a non-inactivating persistent sodium current is induced (site 3-like action). Interestingly, both effects take place in a voltage-dependent manner, producing a bell-shaped curve between -80 and 0 mV. In vivo, induces an irreversible spastic paralysis when injected into insects. The protein is U3-agatoxin-Ao1f of Agelena orientalis (Funnel-web spider).